The chain runs to 214 residues: ATP phosphoribosyltransferase (214 aa).

It belongs to the ATP phosphoribosyltransferase family. Short subfamily. As to quaternary structure, heteromultimer composed of HisG and HisZ subunits.

The protein localises to the cytoplasm. The catalysed reaction is 1-(5-phospho-beta-D-ribosyl)-ATP + diphosphate = 5-phospho-alpha-D-ribose 1-diphosphate + ATP. It participates in amino-acid biosynthesis; L-histidine biosynthesis; L-histidine from 5-phospho-alpha-D-ribose 1-diphosphate: step 1/9. Catalyzes the condensation of ATP and 5-phosphoribose 1-diphosphate to form N'-(5'-phosphoribosyl)-ATP (PR-ATP). Has a crucial role in the pathway because the rate of histidine biosynthesis seems to be controlled primarily by regulation of HisG enzymatic activity. This chain is ATP phosphoribosyltransferase, found in Methylobacillus flagellatus (strain ATCC 51484 / DSM 6875 / VKM B-1610 / KT).